The chain runs to 527 residues: Arginine--tRNA ligase (527 aa).

Positions 111–121 match the 'HIGH' region motif; sequence ANPTGPLHIGH.

The protein belongs to the class-I aminoacyl-tRNA synthetase family. Monomer.

It is found in the cytoplasm. The enzyme catalyses tRNA(Arg) + L-arginine + ATP = L-arginyl-tRNA(Arg) + AMP + diphosphate. In Campylobacter concisus (strain 13826), this protein is Arginine--tRNA ligase.